Reading from the N-terminus, the 147-residue chain is Large ribosomal subunit protein uL15 (147 aa).

A disordered region spans residues 1–62 (MDLSNLRPAI…GQMPLQRRLP (62 aa)). 2 stretches are compositionally biased toward gly residues: residues 21–31 (RGPGSGNGKTA) and 42–52 (SGGGVKPGFEG).

The protein belongs to the universal ribosomal protein uL15 family. Part of the 50S ribosomal subunit.

Binds to the 23S rRNA. This chain is Large ribosomal subunit protein uL15, found in Syntrophotalea carbinolica (strain DSM 2380 / NBRC 103641 / GraBd1) (Pelobacter carbinolicus).